We begin with the raw amino-acid sequence, 246 residues long: Homeobox protein Hox-B4a (246 aa).

The disordered stretch occupies residues 23–125 (YSQSDYLPSH…SQNTSTVSSR (103 aa)). 2 stretches are compositionally biased toward polar residues: residues 39-48 (AQRQDPSFQH) and 112-123 (QTPTSQNTSTVS). Positions 130 to 135 (VYPWMK) match the Antp-type hexapeptide motif. Positions 151–210 (PKRSRTAYTRQQVLELEKEFHYNRYLTRRRRVEIAHTLCLSERQIKIWFQNRRMKWKKDH) form a DNA-binding region, homeobox. Positions 210-246 (HKLPNTKIRSNSASTNSSGCPTLCSNQSRASGPPPSL) are disordered. Residues 216–239 (KIRSNSASTNSSGCPTLCSNQSRA) show a composition bias toward polar residues.

The protein belongs to the Antp homeobox family. Deformed subfamily.

The protein localises to the nucleus. In terms of biological role, sequence-specific transcription factor which is part of a developmental regulatory system that provides cells with specific positional identities on the anterior-posterior axis. This chain is Homeobox protein Hox-B4a (hoxb4a), found in Danio rerio (Zebrafish).